The chain runs to 823 residues: Ankyrin repeat domain-containing protein 20A1 (823 aa).

5 ANK repeats span residues 66–95, 99–128, 132–161, 165–194, and 198–227; these read QHRT…QIDV, ENRT…NPNL, YGNT…HIEA, DNNT…SSHA, and LRRS…DVFA. 2 disordered regions span residues 301 to 343 and 355 to 402; these read VPEK…EVED and VQTL…LSEN. Residues 372–384 show a composition bias toward basic and acidic residues; sequence QERHERSEKKQPQ. Coiled-coil stretches lie at residues 431 to 480, 565 to 724, and 776 to 805; these read KKLK…KQLE, EMIT…NNST, and LVLE…EKTE.

The polypeptide is Ankyrin repeat domain-containing protein 20A1 (ANKRD20A1) (Homo sapiens (Human)).